The primary structure comprises 273 residues: Odontogenic ameloblast-associated protein (273 aa).

The N-terminal stretch at 1–15 (MKIIILLGLIGASSS) is a signal peptide. A disordered region spans residues 100 to 124 (QGGQAGQPDLSQQQTPPQTQQSASP). Residues 110 to 121 (SQQQTPPQTQQS) are compositionally biased toward low complexity. Residues threonine 114 and threonine 118 are each glycosylated (O-linked (GalNAc...) threonine). The interval 125-127 (MSY) is interaction with ARHGEF5. Residues threonine 159, threonine 240, threonine 241, threonine 247, threonine 252, threonine 258, and threonine 267 are each glycosylated (O-linked (GalNAc...) threonine). Over residues 240–252 (TTSPKPSTDNFFT) the composition is skewed to polar residues. Positions 240-273 (TTSPKPSTDNFFTSGIDPTIAPEQKVKTDSLREP) are disordered. Over residues 263-273 (QKVKTDSLREP) the composition is skewed to basic and acidic residues.

This sequence belongs to the ODAM family. In terms of assembly, interacts (via C-terminus) with ARHGEF5. In terms of processing, O-glycosylated. In terms of tissue distribution, highly expressed in tooth-associated epithelia. Predominantly expressed in mandible.

It localises to the secreted. The protein resides in the cytoplasm. It is found in the nucleus. Tooth-associated epithelia protein that probably plays a role in odontogenesis, the complex process that results in the initiation and generation of the tooth. May be incorporated in the enamel matrix at the end of mineralization process. Involved in the induction of RHOA activity via interaction with ARHGEF and expression of downstream factors such as ROCK. Plays a role in attachment of the junctional epithelium to the tooth surface. This Mus musculus (Mouse) protein is Odontogenic ameloblast-associated protein (Odam).